A 332-amino-acid polypeptide reads, in one-letter code: Holliday junction branch migration complex subunit RuvB (332 aa).

Residues 1 to 181 (MSRILDNEIM…FGITGHMEYY (181 aa)) are large ATPase domain (RuvB-L). ATP-binding positions include L20, R21, G62, K65, T66, T67, 128–130 (EDF), R171, Y181, and R218. T66 serves as a coordination point for Mg(2+). The segment at 182 to 252 (AHAGLTEIVE…ITDKALTMLD (71 aa)) is small ATPAse domain (RuvB-S). The segment at 255 to 332 (HEGLDYVDQK…EHLGYEYSEK (78 aa)) is head domain (RuvB-H). The DNA site is built by R291, R310, R312, and R315.

The protein belongs to the RuvB family. Homohexamer. Forms an RuvA(8)-RuvB(12)-Holliday junction (HJ) complex. HJ DNA is sandwiched between 2 RuvA tetramers; dsDNA enters through RuvA and exits via RuvB. An RuvB hexamer assembles on each DNA strand where it exits the tetramer. Each RuvB hexamer is contacted by two RuvA subunits (via domain III) on 2 adjacent RuvB subunits; this complex drives branch migration. In the full resolvosome a probable DNA-RuvA(4)-RuvB(12)-RuvC(2) complex forms which resolves the HJ.

Its subcellular location is the cytoplasm. It carries out the reaction ATP + H2O = ADP + phosphate + H(+). Its function is as follows. The RuvA-RuvB-RuvC complex processes Holliday junction (HJ) DNA during genetic recombination and DNA repair, while the RuvA-RuvB complex plays an important role in the rescue of blocked DNA replication forks via replication fork reversal (RFR). RuvA specifically binds to HJ cruciform DNA, conferring on it an open structure. The RuvB hexamer acts as an ATP-dependent pump, pulling dsDNA into and through the RuvAB complex. RuvB forms 2 homohexamers on either side of HJ DNA bound by 1 or 2 RuvA tetramers; 4 subunits per hexamer contact DNA at a time. Coordinated motions by a converter formed by DNA-disengaged RuvB subunits stimulates ATP hydrolysis and nucleotide exchange. Immobilization of the converter enables RuvB to convert the ATP-contained energy into a lever motion, pulling 2 nucleotides of DNA out of the RuvA tetramer per ATP hydrolyzed, thus driving DNA branch migration. The RuvB motors rotate together with the DNA substrate, which together with the progressing nucleotide cycle form the mechanistic basis for DNA recombination by continuous HJ branch migration. Branch migration allows RuvC to scan DNA until it finds its consensus sequence, where it cleaves and resolves cruciform DNA. The chain is Holliday junction branch migration complex subunit RuvB from Streptococcus pneumoniae (strain JJA).